We begin with the raw amino-acid sequence, 205 residues long: Troponin I, cardiac muscle (205 aa).

Positions 1–38 are disordered; that stretch reads MADQSGNAAPPPVRRRSSANYRAYATEPHAKKKSKISA. At A2 the chain carries N-acetylalanine. S5 carries the post-translational modification Phosphoserine. Residues S17 and S18 each carry the phosphoserine; by PKA and PKD/PRKD1 modification. A Phosphotyrosine modification is found at Y21. Residue T26 is modified to Phosphothreonine; by STK4/MST1. The involved in binding TNC stretch occupies residues 27-74; that stretch reads EPHAKKKSKISASRKLQLKTLMLQIAKQELEREAVERRGEKGRALSTR. Phosphoserine; by PKC/PRKCE is present on residues S37 and S39. Residue T46 is modified to Phosphothreonine; by STK4/MST1. Residue S72 is modified to Phosphoserine. At T73 the chain carries Phosphothreonine. An involved in binding TNC and actin region spans residues 124-145; sequence NQKIFDLRGKFKRPTLRRVRIS. At T138 the chain carries Phosphothreonine; by STK4/MST1. Residue S145 is modified to Phosphoserine; by PAK3. Residue T176 is modified to Phosphothreonine. S194 is modified (phosphoserine).

It belongs to the troponin I family. In terms of assembly, binds to actin and tropomyosin. Interacts with TRIM63. Interacts with STK4/MST1. Phosphorylated at Ser-17 and Ser-18 by PRKD1; phosphorylation reduces myofilament calcium sensitivity. Phosphorylated preferentially at Thr-26. Phosphorylation by STK4/MST1 alters its binding affinity to TNNC1 (cardiac Tn-C) and TNNT2 (cardiac Tn-T). Phosphorylated at Ser-37 and Ser-39 by PRKCE; phosphorylation increases myocardium contractile dysfunction.

In terms of biological role, troponin I is the inhibitory subunit of troponin, the thin filament regulatory complex which confers calcium-sensitivity to striated muscle actomyosin ATPase activity. The polypeptide is Troponin I, cardiac muscle (TNNI3) (Equus caballus (Horse)).